Here is a 514-residue protein sequence, read N- to C-terminus: MRFKLDGRIIFSKDVEEETQKDIVEVLENRDIFLKGVPEGKENEASKIEGYEFDGKDLKLKMTSGTYTRAHEGIVRLKKPIMEKVGRKHQIGIRDVAIDRYVVTLTAEPSKVSELKGLKVPECEVELESEKINIVFENLGDGELKRNIIDRAIKFVKNELDKQDQDLTFEVCKIAPGTIVSDYKAKREITFDTDPTELAEPNGWVKRFPGRGQWFYTAPMAKLFRAFESLIIEECIDKIGFDECLFPKLIPLDVMYKMRYLEGLPEGMYYVCPPKREPEMFQDFVNEMMIKKEIPIEKLKTLLRDPAYVLAPAQCEPFYSFFDHELVDVDHPSKFFDKSGWTYRWEGGGAKGLDRVNEFLRGECVWMGTPEFVETVRDDTLKYAENLAEKLDLEYWTEVGDDPFYLEGRKKEDRGIEFPDVPKYEMRLWLPHIKEERKGVAVTSANIHGTHFIEGFGIKDYKERKVWTGCTGYGLTRWVIGFLAQYGYNYDDWPELIQKKVGKLPEIPKLITWP.

A313 is an L-serine binding site. C315 lines the Zn(2+) pocket. R344 contacts L-serine. ATP-binding positions include 344 to 346 (RWE) and 355 to 356 (RV). L-serine is bound at residue 361–363 (RGE). Zn(2+) is bound by residues E363 and C470. ATP is bound at residue R477.

Belongs to the class-II aminoacyl-tRNA synthetase family. Type-2 seryl-tRNA synthetase subfamily. Homodimer. It depends on Zn(2+) as a cofactor.

It localises to the cytoplasm. The catalysed reaction is tRNA(Ser) + L-serine + ATP = L-seryl-tRNA(Ser) + AMP + diphosphate + H(+). It carries out the reaction tRNA(Sec) + L-serine + ATP = L-seryl-tRNA(Sec) + AMP + diphosphate + H(+). It participates in aminoacyl-tRNA biosynthesis; selenocysteinyl-tRNA(Sec) biosynthesis; L-seryl-tRNA(Sec) from L-serine and tRNA(Sec): step 1/1. Its function is as follows. Catalyzes the attachment of serine to tRNA(Ser). Is also able to aminoacylate tRNA(Sec) with serine, to form the misacylated tRNA L-seryl-tRNA(Sec), which will be further converted into selenocysteinyl-tRNA(Sec). The chain is Type-2 serine--tRNA ligase from Methanococcus maripaludis (strain C7 / ATCC BAA-1331).